Reading from the N-terminus, the 124-residue chain is Ribonuclease P protein component 2 (124 aa).

This sequence belongs to the eukaryotic/archaeal RNase P protein component 2 family. In terms of assembly, consists of a catalytic RNA component and at least 4-5 protein subunits.

It localises to the cytoplasm. The catalysed reaction is Endonucleolytic cleavage of RNA, removing 5'-extranucleotides from tRNA precursor.. In terms of biological role, part of ribonuclease P, a protein complex that generates mature tRNA molecules by cleaving their 5'-ends. In Methanothermobacter thermautotrophicus (strain ATCC 29096 / DSM 1053 / JCM 10044 / NBRC 100330 / Delta H) (Methanobacterium thermoautotrophicum), this protein is Ribonuclease P protein component 2.